The sequence spans 390 residues: 3-ketoacyl-CoA thiolase (390 aa).

Cys95 (acyl-thioester intermediate) is an active-site residue. Residues His346 and Cys376 each act as proton acceptor in the active site.

This sequence belongs to the thiolase-like superfamily. Thiolase family. In terms of assembly, heterotetramer of two alpha chains (FadB) and two beta chains (FadA).

The protein localises to the cytoplasm. The enzyme catalyses an acyl-CoA + acetyl-CoA = a 3-oxoacyl-CoA + CoA. It participates in lipid metabolism; fatty acid beta-oxidation. In terms of biological role, catalyzes the final step of fatty acid oxidation in which acetyl-CoA is released and the CoA ester of a fatty acid two carbons shorter is formed. The protein is 3-ketoacyl-CoA thiolase of Acinetobacter baylyi (strain ATCC 33305 / BD413 / ADP1).